Reading from the N-terminus, the 715-residue chain is Elongation factor G (715 aa).

One can recognise a tr-type G domain in the interval 8–290 (NRYRNIGICA…AVIDFLPAPT (283 aa)). Residues 17 to 24 (AHVDAGKT), 88 to 92 (DTPGH), and 142 to 145 (NKMD) each bind GTP.

This sequence belongs to the TRAFAC class translation factor GTPase superfamily. Classic translation factor GTPase family. EF-G/EF-2 subfamily.

The protein resides in the cytoplasm. Its function is as follows. Catalyzes the GTP-dependent ribosomal translocation step during translation elongation. During this step, the ribosome changes from the pre-translocational (PRE) to the post-translocational (POST) state as the newly formed A-site-bound peptidyl-tRNA and P-site-bound deacylated tRNA move to the P and E sites, respectively. Catalyzes the coordinated movement of the two tRNA molecules, the mRNA and conformational changes in the ribosome. The sequence is that of Elongation factor G from Pseudomonas fluorescens (strain ATCC BAA-477 / NRRL B-23932 / Pf-5).